Here is a 288-residue protein sequence, read N- to C-terminus: UTP--glucose-1-phosphate uridylyltransferase (288 aa).

This sequence belongs to the UDPGP type 2 family.

It catalyses the reaction alpha-D-glucose 1-phosphate + UTP + H(+) = UDP-alpha-D-glucose + diphosphate. It functions in the pathway glycolipid metabolism; diglucosyl-diacylglycerol biosynthesis. Functionally, catalyzes the formation of UDP-glucose from glucose-1-phosphate and UTP. This is an intermediate step in the biosynthesis of diglucosyl-diacylglycerol (Glc2-DAG), i.e. the predominant glycolipid found in the S.aureus membrane, which is also used as a membrane anchor for lipoteichoic acid (LTA). This Staphylococcus aureus (strain bovine RF122 / ET3-1) protein is UTP--glucose-1-phosphate uridylyltransferase (gtaB).